Reading from the N-terminus, the 249-residue chain is Low affinity immunoglobulin gamma Fc region receptor III-A (249 aa).

The signal sequence occupies residues 1–20 (MWYLLLPTALLLTVSSGVGA). The Extracellular portion of the chain corresponds to 21 to 203 (GLQKAVVNLD…SPSSFLPWHQ (183 aa)). Ig-like C2-type domains lie at 31–103 (PEWV…QLDV) and 117–188 (FQEG…LQIS). 2 disulfides stabilise this stretch: Cys46/Cys88 and Cys127/Cys171. Asn55 and Asn62 each carry an N-linked (GlcNAc...) asparagine glycan. Asn179 is a glycosylation site (N-linked (GlcNAc...) asparagine). Residues 204–224 (ITFCLLIGLLFAIDTVLYFSV) form a helical membrane-spanning segment. The Cytoplasmic segment spans residues 225–249 (QRSLQSSVAVYEEPKLHWSKEPQDK). Tyr235 is modified (phosphotyrosine).

As to quaternary structure, forms a heterooligomeric complex with ITAM-containing signaling subunits FCER1G. Interacts (via transmembrane domain) with signaling subunits; this interaction is a prerequisite for receptor complex expression on the cell surface and intracellular signal transduction. Binds the Fc region of antigen-complexed IgG. In terms of processing, N-glycosylated. Phosphorylated following receptor ligation.

It localises to the cell membrane. Receptor for the invariable Fc fragment of immunoglobulin gamma (IgG). Binds with intermediate affinity to both IgG2a and IgG2b. Can bind to IgG2a and IgG2b monomers. Does not display binding to IgG1 or IgG3. Recognizes neutralizing virus-specific IgGs displayed on the cell surface of infected cells and triggers antibody-dependent cellular cytotoxicity (ADCC). Confers protection to lethal influenza virus infection. On splenic dendritic cells, uptakes antigen immune complexes and efficiently divert them into MHC class I and II antigen presentation pathways to provide for superior priming of CD4-positive and CD8-positive T cell immune responses. Mediates neutrophil activation by IgG complexes redundantly with FCGR2A. Plays a role in promoting bone resorption by enhancing osteoclast differentiation following binding to IgG2a. Also acts as a receptor for the Fc region of immunoglobulin epsilon (IgE). Binds with low affinity to both the a and b allotypes of IgE. Has also been shown to bind to IgE allotype a only but not to allotype b. Binds aggregated IgE but not the monomeric form and bound monomeric IgG is readily displaced by IgE complexes. Binding to IgE promotes macrophage-mediated phagocytosis, antigen presentation to T cells, production of pro-inflammatory cytokines and the late phase of cutaneous allergic reactions. Mediates enhanced ADCC in response to afucosylated IgGs. The polypeptide is Low affinity immunoglobulin gamma Fc region receptor III-A (Rattus norvegicus (Rat)).